Here is a 365-residue protein sequence, read N- to C-terminus: Endophilin-B1 (365 aa).

Met-1 carries the N-acetylmethionine modification. A membrane-binding amphipathic helix region spans residues 1-30 (MNIMDFNVKKLAADAGTFLSRAVQFTEEKL). The tract at residues 1–37 (MNIMDFNVKKLAADAGTFLSRAVQFTEEKLGQAEKTE) is required for membrane binding. One can recognise a BAR domain in the interval 27-261 (EEKLGQAEKT…LGSFPSNYLS (235 aa)). Position 145 is a phosphothreonine; by CDK5 (Thr-145). The stretch at 155–195 (YKTIAKERKLLQNKRLDLDAAKTRLKKAKAAETRNSSEQEL) forms a coiled coil. The 61-residue stretch at 305–365 (SGSRKARVLY…VPITYLELLN (61 aa)) folds into the SH3 domain.

This sequence belongs to the endophilin family. In terms of assembly, homodimer, and heterodimer with SH3GLB2. Binds BAX; induction of apoptosis augments BAX binding. Binds DNM1, HTT, AMPH, BIN1 and ARFGAP1. Interacts with UVRAG; UVRAG bridges the interaction to BECN1 indicative for an association with the PI3K complex II (PI3KC3-C2). In terms of processing, phosphorylated at Thr-145 by CDK5; this phosphorylation is required for autophagy induction in starved neurons and facilitates homodimerization. In terms of tissue distribution, highly expressed in heart, skeletal muscle, kidney and placenta. Detected at lower levels in brain, colon, thymus, spleen, liver, small intestine, lung and peripheral blood leukocytes.

It localises to the cytoplasm. Its subcellular location is the golgi apparatus membrane. The protein resides in the mitochondrion outer membrane. It is found in the cytoplasmic vesicle. The protein localises to the autophagosome membrane. It localises to the midbody. Functionally, may be required for normal outer mitochondrial membrane dynamics. Required for coatomer-mediated retrograde transport in certain cells. May recruit other proteins to membranes with high curvature. May promote membrane fusion. Involved in activation of caspase-dependent apoptosis by promoting BAX/BAK1 activation. Isoform 1 acts proapoptotic in fibroblasts. Involved in caspase-independent apoptosis during nutrition starvation and involved in the regulation of autophagy. Activates lipid kinase activity of PIK3C3 during autophagy probably by associating with the PI3K complex II (PI3KC3-C2). Associated with PI3KC3-C2 during autophagy may regulate the trafficking of ATG9A from the Golgi complex to the peripheral cytoplasm for the formation of autophagosomes by inducing Golgi membrane tubulation and fragmentation. Involved in regulation of degradative endocytic trafficking and cytokinesis, probably in the context of PI3KC3-C2. Isoform 2 acts antiapoptotic in neuronal cells; involved in maintenance of mitochondrial morphology and promotes neuronal viability. The sequence is that of Endophilin-B1 (SH3GLB1) from Homo sapiens (Human).